The sequence spans 288 residues: Putative transcription factor kapC (288 aa).

The segment covering 1–10 (MQPTLAPAPH) has biased composition (pro residues). Residues 1 to 121 (MQPTLAPAPH…AAQRAFRQRK (121 aa)) are disordered. Positions 26 to 41 (HDQLLAAHQHLSHPQQ) are enriched in low complexity. Over residues 42–54 (ARPPPPPPQPPHM) the composition is skewed to pro residues. The segment covering 84–93 (QPDLSGQESP) has biased composition (polar residues). Positions 100–163 (PLSTSKRAAQ…EYIINLQSRL (64 aa)) constitute a bZIP domain. The interval 101 to 124 (LSTSKRAAQNRAAQRAFRQRKEAH) is basic motif. A compositionally biased stretch (low complexity) spans 106-116 (RAAQNRAAQRA). The segment at 128–159 (LEGKVKAYETMGEAIKALQAENYQLREYIINL) is leucine-zipper. 2 disordered regions span residues 172–226 (ELPG…NDDM) and 242–288 (PPTE…PLIS). Pro residues predominate over residues 202 to 212 (PVPPPTAPQQP). Low complexity predominate over residues 213–222 (QPAQNQASAP).

Belongs to the bZIP family.

The protein localises to the nucleus. Functionally, putative transcription factor. The sequence is that of Putative transcription factor kapC (kapC) from Aspergillus clavatus (strain ATCC 1007 / CBS 513.65 / DSM 816 / NCTC 3887 / NRRL 1 / QM 1276 / 107).